The chain runs to 699 residues: Keratinocyte proline-rich protein (699 aa).

Serine 436 bears the Phosphoserine mark. 2 stretches are compositionally biased toward pro residues: residues 448-477 (PYPRPEPCPSPEPRPCPRPRPRPEPCPSPE) and 513-533 (DPCPSPEPRPRPCPEPCPSPE). The tract at residues 448 to 533 (PYPRPEPCPS…PCPEPCPSPE (86 aa)) is disordered.

In terms of tissue distribution, expressed in the stratified squamous epithelial layers of the skin, esophagus and tongue.

The protein resides in the cytoplasm. The sequence is that of Keratinocyte proline-rich protein (Kprp) from Rattus norvegicus (Rat).